Consider the following 407-residue polypeptide: Probable tRNA sulfurtransferase (407 aa).

In terms of domain architecture, THUMP spans 61–165; sequence NEIIQRLSKV…MDAIYIYEKV (105 aa). ATP contacts are provided by residues 183–184, 208–209, Arg-265, Gly-287, and Gln-296; these read ML and HF.

This sequence belongs to the ThiI family.

Its subcellular location is the cytoplasm. It catalyses the reaction [ThiI sulfur-carrier protein]-S-sulfanyl-L-cysteine + a uridine in tRNA + 2 reduced [2Fe-2S]-[ferredoxin] + ATP + H(+) = [ThiI sulfur-carrier protein]-L-cysteine + a 4-thiouridine in tRNA + 2 oxidized [2Fe-2S]-[ferredoxin] + AMP + diphosphate. The catalysed reaction is [ThiS sulfur-carrier protein]-C-terminal Gly-Gly-AMP + S-sulfanyl-L-cysteinyl-[cysteine desulfurase] + AH2 = [ThiS sulfur-carrier protein]-C-terminal-Gly-aminoethanethioate + L-cysteinyl-[cysteine desulfurase] + A + AMP + 2 H(+). The protein operates within cofactor biosynthesis; thiamine diphosphate biosynthesis. Its function is as follows. Catalyzes the ATP-dependent transfer of a sulfur to tRNA to produce 4-thiouridine in position 8 of tRNAs, which functions as a near-UV photosensor. Also catalyzes the transfer of sulfur to the sulfur carrier protein ThiS, forming ThiS-thiocarboxylate. This is a step in the synthesis of thiazole, in the thiamine biosynthesis pathway. The sulfur is donated as persulfide by IscS. The sequence is that of Probable tRNA sulfurtransferase from Staphylococcus epidermidis (strain ATCC 35984 / DSM 28319 / BCRC 17069 / CCUG 31568 / BM 3577 / RP62A).